The sequence spans 217 residues: Trimethylamine corrinoid protein (217 aa).

The B12-binding N-terminal domain maps to 1 to 92; it reads MANKEEIIAK…EMEKRKSQTK (92 aa). The 124-residue stretch at 94 to 217 folds into the B12-binding domain; it reads LGTVAIGTIE…VAKVKAALNV (124 aa). Residue His107 coordinates methylcob(III)alamin.

This sequence belongs to the methylamine corrinoid protein family. In terms of assembly, can form a complex with MttB.

The protein operates within one-carbon metabolism; methanogenesis from trimethylamine. Acts probably as a methyl group carrier between MttB and either MtbA or MtaA. The chain is Trimethylamine corrinoid protein from Methanosarcina barkeri.